The sequence spans 208 residues: Ubiquinone biosynthesis protein COQ4 homolog, mitochondrial (208 aa).

Zn(2+) is bound by residues His-105, Asp-106, His-109, and Glu-122.

Belongs to the COQ4 family. Component of a multi-subunit COQ enzyme complex. Zn(2+) is required as a cofactor.

Its subcellular location is the mitochondrion inner membrane. It carries out the reaction a 4-hydroxy-3-methoxy-5-(all-trans-polyprenyl)benzoate + H(+) = a 2-methoxy-6-(all-trans-polyprenyl)phenol + CO2. It functions in the pathway cofactor biosynthesis; ubiquinone biosynthesis. Its function is as follows. Lyase that catalyzes the C1-decarboxylation of 4-hydroxy-3-methoxy-5-(all-trans-polyprenyl)benzoic acid into 2-methoxy-6-(all-trans-polyprenyl)phenol during ubiquinone biosynthesis. This Nematostella vectensis (Starlet sea anemone) protein is Ubiquinone biosynthesis protein COQ4 homolog, mitochondrial.